The sequence spans 332 residues: Chorismate synthase (332 aa).

NADP(+) is bound at residue arginine 46. FMN is bound by residues 123-125 (HFS), glycine 253, 268-272 (KPTSS), and arginine 295.

The protein belongs to the chorismate synthase family. As to quaternary structure, homotetramer. FMNH2 is required as a cofactor.

It catalyses the reaction 5-O-(1-carboxyvinyl)-3-phosphoshikimate = chorismate + phosphate. It functions in the pathway metabolic intermediate biosynthesis; chorismate biosynthesis; chorismate from D-erythrose 4-phosphate and phosphoenolpyruvate: step 7/7. Its function is as follows. Catalyzes the anti-1,4-elimination of the C-3 phosphate and the C-6 proR hydrogen from 5-enolpyruvylshikimate-3-phosphate (EPSP) to yield chorismate, which is the branch point compound that serves as the starting substrate for the three terminal pathways of aromatic amino acid biosynthesis. This reaction introduces a second double bond into the aromatic ring system. This chain is Chorismate synthase, found in Chitinophaga pinensis (strain ATCC 43595 / DSM 2588 / LMG 13176 / NBRC 15968 / NCIMB 11800 / UQM 2034).